Consider the following 525-residue polypeptide: Histidine-rich glycoprotein (525 aa).

The signal sequence occupies residues 1–18; that stretch reads MKALIAALLLITLQYSCA. Cystatin domains lie at 19–136 and 137–254; these read VSPT…SALA and NTKD…NING. 5 cysteine pairs are disulfide-bonded: Cys24-Cys504, Cys78-Cys89, Cys105-Cys126, Cys203-Cys417, and Cys218-Cys241. The segment at 41 to 84 is interaction with ATP5F1A; sequence RRRDGYLFQLLRIADAHLDRVENTTVYYLVLDVQESDCSVLSRK. Asn63 carries an N-linked (GlcNAc...) asparagine glycan. An N-linked (GlcNAc...) asparagine glycan is attached at Asn125. Residues 252 to 407 form a disordered region; the sequence is INGVPPHLGH…GHHPHGHHPH (156 aa). The span at 284–293 shows a compositional bias: basic residues; that stretch reads RDHHHPHKPH. A compositionally biased stretch (pro residues) spans 310-320; that stretch reads PPLPQGPPPLL. Residues 323 to 348 show a composition bias toward polar residues; sequence SCSSCQHATFGTNGAQRHSHNNNSSD. N-linked (GlcNAc...) asparagine glycans are attached at residues Asn344 and Asn345. Residues 348-382 are necessary for endothelial cell focal adhesions and anti-angiogenic activities; the sequence is DLHPHKHHSHEQHPHGHHPHAHHPHEHDTHRQHPH. Basic residues-rich tracts occupy residues 351–371 and 379–407; these read PHKH…AHHP and QHPH…HHPH.

As to quaternary structure, interacts (via the HRR domain) with TPM1; the interaction appears to contribute to the antiangiogenic properties of the HRR domain. Interacts with THBS2; the interaction blocks the antiangiogenic effect of THBS2 with CD36. Interacts with THBS1 (via the TSP type I repeats); the interaction blocks the antiangiogenic effect of THBS1 with CD3. Interacts with PLG (via its Kringle domains); the interaction tethers PLG to the cell surface and enhances its activation. Interacts with HPSE; the interaction is enhanced at acidic pH, partially inhibits binding of HPSE to cell surface receptors and modulates its enzymatic activity. Interacts (via the HRR domain) with TMP1; the interaction partially mediates the antiangiogenic properties of HRG. Interacts with kappa and lambda light chains of IgG molecules. Interacts with ATP5F1A; the interaction occurs on the surface of T-cells and alters their cell morphology in concert with CONA. Binds IgG molecules containing kappa and lambda light chains and inhibits the formation of insoluble immunoglobulin complexes. Interacts with F12; the interaction, which is enhanced in the presence of zinc ions and inhibited by heparin-binding to HRG, inhibits factor XII autoactivation and contact-initiated coagulation. Zn(2+) is required as a cofactor. Proteolytic cleavage produces several HRG fragments which are mostly disulfide-linked and, therefore, not released. Cleavage by plasmin is inhibited in the presence of heparin, zinc ions or in an acidic environment. Cleavage reduces binding of HRG to heparan sulfate, but enhances the ability of HRG to bind and tether plasminogen to the cell surface. On platelet activation, releases a 33 kDa antiangiogenic peptide which encompasses the HRR. Also cleaved in the C-terminal by plasmin. In terms of processing, N-glycosylated. In terms of tissue distribution, expressed in macrophages and in malignant cells. Expressed by the liver and secreted in plasma (at protein level).

Its subcellular location is the secreted. In terms of biological role, plasma glycoprotein that binds a number of ligands such as heme, heparin, heparan sulfate, thrombospondin, plasminogen, and divalent metal ions. Binds heparin and heparin/glycosaminoglycans in a zinc-dependent manner. Binds heparan sulfate on the surface of liver, lung, kidney and heart endothelial cells. Binds to N-sulfated polysaccharide chains on the surface of liver endothelial cells. Inhibits rosette formation. Acts as an adapter protein and is implicated in regulating many processes such as immune complex and pathogen clearance, cell chemotaxis, cell adhesion, angiogenesis, coagulation and fibrinolysis. Mediates clearance of necrotic cells through enhancing the phagocytosis of necrotic cells in a heparan sulfate-dependent pathway. This process can be regulated by the presence of certain HRG ligands such as heparin and zinc ions. Binds to IgG subclasses of immunoglobins containing kappa and lambda light chains with different affinities regulating their clearance and inhibiting the formation of insoluble immune complexes. Tethers plasminogen to the cell surface. Binds T-cells and alters the cell morphology. Modulates angiogenesis by blocking the CD6-mediated antiangiongenic effect of thrombospondins, THBS1 and THBS2. Acts as a regulator of the vascular endothelial growth factor (VEGF) signaling pathway; inhibits endothelial cell motility by reducing VEGF-induced complex formation between PXN/paxillin and ILK/integrin-linked protein kinase and by promoting inhibition of VEGF-induced tyrosine phosphorylation of focal adhesion kinases and alpha-actinins in endothelial cells. Also plays a role in the regulation of tumor angiogenesis and tumor immune surveillance. Normalizes tumor vessels and promotes antitumor immunity by polarizing tumor-associated macrophages, leading to decreased tumor growth and metastasis. This is Histidine-rich glycoprotein (HRG) from Homo sapiens (Human).